The sequence spans 464 residues: Fumarate hydratase class II (464 aa).

Substrate contacts are provided by residues 98–100, 129–132, 139–141, and Thr187; these read SGT, HPND, and SSN. The active-site Proton donor/acceptor is His188. Ser318 is a catalytic residue. Substrate contacts are provided by residues Ser319 and 324 to 326; that span reads KVN.

The protein belongs to the class-II fumarase/aspartase family. Fumarase subfamily. As to quaternary structure, homotetramer.

The protein resides in the cytoplasm. The catalysed reaction is (S)-malate = fumarate + H2O. The protein operates within carbohydrate metabolism; tricarboxylic acid cycle; (S)-malate from fumarate: step 1/1. Its function is as follows. Involved in the TCA cycle. Catalyzes the stereospecific interconversion of fumarate to L-malate. This is Fumarate hydratase class II from Wigglesworthia glossinidia brevipalpis.